A 412-amino-acid chain; its full sequence is Aspartokinase (412 aa).

ACT domains follow at residues 266-340 (LTIR…GDTN) and 346-412 (IVGV…RQGE).

The protein belongs to the aspartokinase family.

It carries out the reaction L-aspartate + ATP = 4-phospho-L-aspartate + ADP. Its pathway is amino-acid biosynthesis; L-lysine biosynthesis via DAP pathway; (S)-tetrahydrodipicolinate from L-aspartate: step 1/4. The protein operates within amino-acid biosynthesis; L-methionine biosynthesis via de novo pathway; L-homoserine from L-aspartate: step 1/3. It participates in amino-acid biosynthesis; L-threonine biosynthesis; L-threonine from L-aspartate: step 1/5. This chain is Aspartokinase (lysC), found in Pseudomonas aeruginosa (strain ATCC 15692 / DSM 22644 / CIP 104116 / JCM 14847 / LMG 12228 / 1C / PRS 101 / PAO1).